The sequence spans 154 residues: Transcriptional repressor NrdR (154 aa).

A zinc finger spans residues 3 to 34 (CPFCNHGELKVIDSRNAPESNAIKRRRECLRC). In terms of domain architecture, ATP-cone spans 48–138 (VQVLKRDGRY…VYRRFKDVGE (91 aa)).

This sequence belongs to the NrdR family. Zn(2+) serves as cofactor.

Its function is as follows. Negatively regulates transcription of bacterial ribonucleotide reductase nrd genes and operons by binding to NrdR-boxes. The chain is Transcriptional repressor NrdR from Chlamydia trachomatis serovar L2 (strain ATCC VR-902B / DSM 19102 / 434/Bu).